We begin with the raw amino-acid sequence, 60 residues long: Large ribosomal subunit protein uL30 (60 aa).

The protein belongs to the universal ribosomal protein uL30 family. Part of the 50S ribosomal subunit.

This is Large ribosomal subunit protein uL30 from Verminephrobacter eiseniae (strain EF01-2).